Reading from the N-terminus, the 282-residue chain is Parvulin-like PPIase (282 aa).

The signal sequence occupies residues 1–20; it reads MKKLSVIFLSVSMLSGIAFA. A PpiC domain is found at 138–231; the sequence is KEQIKVAHIL…FGWHIIKVLE (94 aa).

This sequence belongs to the PpiC/parvulin rotamase family.

The protein localises to the cell outer membrane. The enzyme catalyses [protein]-peptidylproline (omega=180) = [protein]-peptidylproline (omega=0). The protein is Parvulin-like PPIase (plp) of Rickettsia felis (strain ATCC VR-1525 / URRWXCal2) (Rickettsia azadi).